A 401-amino-acid polypeptide reads, in one-letter code: Elongation factor Tu 1 (401 aa).

The tr-type G domain occupies 10–209 (KPHVNVGTIG…AVDEYIPTPV (200 aa)). Residues 19 to 26 (GHVDHGKT) form a G1 region. 19-26 (GHVDHGKT) provides a ligand contact to GTP. Thr26 serves as a coordination point for Mg(2+). Positions 60–64 (GITIA) are G2. The G3 stretch occupies residues 81–84 (DCPG). GTP contacts are provided by residues 81 to 85 (DCPGH) and 136 to 139 (NKVD). The interval 136-139 (NKVD) is G4. The tract at residues 174–176 (SAL) is G5.

This sequence belongs to the TRAFAC class translation factor GTPase superfamily. Classic translation factor GTPase family. EF-Tu/EF-1A subfamily. Monomer.

It localises to the cytoplasm. The enzyme catalyses GTP + H2O = GDP + phosphate + H(+). Its function is as follows. GTP hydrolase that promotes the GTP-dependent binding of aminoacyl-tRNA to the A-site of ribosomes during protein biosynthesis. In Roseiflexus castenholzii (strain DSM 13941 / HLO8), this protein is Elongation factor Tu 1.